A 212-amino-acid polypeptide reads, in one-letter code: MNSKFIVIEGLEGAGKTTTRDTVVAVLRAQGINDIVFTREPGGTPLAEKLRDLIKQGIDGEVLTDKAEVLMLYAARVQLVENVIKPALARGSWVVGDRHDLSSQAYQGGGRGIDSQLMASLRDTVLGEFRPDLTLYLDLPPAVGLARARARGELDRIEQESLAFFERTRARYLELAASDASIKTIDASQPIEQVSASISQALAQWLTNQEPV.

10 to 17 (GLEGAGKT) contacts ATP.

Belongs to the thymidylate kinase family.

It carries out the reaction dTMP + ATP = dTDP + ADP. Phosphorylation of dTMP to form dTDP in both de novo and salvage pathways of dTTP synthesis. The protein is Thymidylate kinase of Yersinia pestis bv. Antiqua (strain Antiqua).